Here is a 351-residue protein sequence, read N- to C-terminus: Ion-translocating oxidoreductase complex subunit D (351 aa).

A run of 3 helical transmembrane segments spans residues 37-57 (YFFGWGTLLQVLLAIITAILA), 88-108 (AIPPLSPWWLTVIGVFFAIVI), and 123-143 (PAMAAYVVLLISFPVQMTTWL). Position 187 is an FMN phosphoryl threonine (Thr-187). A run of 4 helical transmembrane segments spans residues 214–234 (FAGLGWLWVNVGFLLGGLFLL), 241–261 (WHIPVSFLASLFIVSSLFAVF), 270–290 (IFNLFSGATMLGAFFIATDPV), and 300–317 (LYYGALIGLLVYMIRSWG).

It belongs to the NqrB/RnfD family. In terms of assembly, the complex is composed of six subunits: RnfA, RnfB, RnfC, RnfD, RnfE and RnfG. Requires FMN as cofactor.

Its subcellular location is the cell inner membrane. Part of a membrane-bound complex that couples electron transfer with translocation of ions across the membrane. The polypeptide is Ion-translocating oxidoreductase complex subunit D (Aliivibrio salmonicida (strain LFI1238) (Vibrio salmonicida (strain LFI1238))).